The sequence spans 419 residues: MNREEQRLAQQTMAFVLAGGRGSRLYELTDRRAKPAMYFGGKSRIIDFPLSNAVNSGIRRIGVATQYKAHSLIRHLQRGWSFFRAERNESLDILPASQQMNDENWYKGTADAVAQNKDIIEGYGPKYIIILAGDHIYKQDYAEMIRHHVESGADVTVGCIEVPRMEASGFGVMKVDTEDRILDFIEKPGDPPAMPGHPDQALASMGIYVFETEYLFKIMEECAAVPGYSHDFGGDIIPTIVRGGKAVAHPFSRSCVRTVNEEAPYWRDVGTVDAFWQANLDLTDFKPALDLYDTEWPIWTYSELTAPAKFIHNEEGRRGSAVSSMVSGGCIISGSSLERCLLFTGVRTHSFSQLNGVVSMPYAIINRNARLTNVVVDRGVVIPQGLVVGEDPALDAQRFRRTDSGVCLITQPMIDKLDM.

Residues Tyr106, Gly171, 186–187 (EK), and Ser204 each bind alpha-D-glucose 1-phosphate.

It belongs to the bacterial/plant glucose-1-phosphate adenylyltransferase family. In terms of assembly, homotetramer.

The enzyme catalyses alpha-D-glucose 1-phosphate + ATP + H(+) = ADP-alpha-D-glucose + diphosphate. It functions in the pathway glycan biosynthesis; glycogen biosynthesis. Involved in the biosynthesis of ADP-glucose, a building block required for the elongation reactions to produce glycogen. Catalyzes the reaction between ATP and alpha-D-glucose 1-phosphate (G1P) to produce pyrophosphate and ADP-Glc. The protein is Glucose-1-phosphate adenylyltransferase of Roseobacter denitrificans (strain ATCC 33942 / OCh 114) (Erythrobacter sp. (strain OCh 114)).